Here is a 20-residue protein sequence, read N- to C-terminus: Brevinin-1ITb (20 aa).

A Methionine sulfoxide; partial modification is found at Met-8. An intrachain disulfide couples Cys-14 to Cys-20.

It belongs to the frog skin active peptide (FSAP) family. Brevinin subfamily. As to expression, expressed by the skin glands.

The protein resides in the secreted. Its function is as follows. Antimicrobial peptide. The sequence is that of Brevinin-1ITb from Rana italica (Italian stream frog).